A 438-amino-acid chain; its full sequence is Keratin, type I cytoskeletal 18 (438 aa).

Residues 4–83 are head; the sequence is AVSSRSTVVS…TLSGNAVISN (80 aa). Residues 84–119 are coil 1A; sequence EKETMQDLNDRLSNYLETVRRLENANQQLEIQIREA. The 312-residue stretch at 84-395 folds into the IF rod domain; it reads EKETMQDLND…HLLGGEDSDT (312 aa). A linker 1 region spans residues 120-136; it reads MEKRGPSVRDYSNYEKI. The segment at 137–228 is coil 1B; sequence IKELRDQIYD…KNHEDEVIAL (92 aa). The interval 229–252 is linker 12; the sequence is RNQVNSCGVQVDLDAPKGTDLAEI. Positions 253-393 are coil 2; the sequence is MATLRAEYEA…YRHLLGGEDS (141 aa). The tract at residues 394–438 is tail; sequence DTLSLQDALSAMKVSNVQTVQKIVVTTQKLVDGKVVEDSTVTETK.

This sequence belongs to the intermediate filament family. As to quaternary structure, heterotetramer of two type I and two type II keratins. Keratin-18 associates with keratin-8. Phosphorylated. In terms of processing, proteolytically cleaved by caspases during epithelial cell apoptosis. As to expression, expressed at low levels in skin.

When phosphorylated, plays a role in filament reorganization. The polypeptide is Keratin, type I cytoskeletal 18 (Protopterus aethiopicus (Marbled lungfish)).